A 202-amino-acid chain; its full sequence is Elongation factor Ts, chloroplastic (202 aa).

Belongs to the EF-Ts family.

The protein localises to the plastid. It localises to the chloroplast. Functionally, associates with the EF-Tu.GDP complex and induces the exchange of GDP to GTP. It remains bound to the aminoacyl-tRNA.EF-Tu.GTP complex up to the GTP hydrolysis stage on the ribosome. The protein is Elongation factor Ts, chloroplastic (tsf) of Phaeodactylum tricornutum (strain CCAP 1055/1).